The primary structure comprises 197 residues: Ras-like protein rasB (197 aa).

13 to 20 contacts GTP; the sequence is GGGGVGKS. The Effector region motif lies at 35–43; it reads YDPTIEDSY. Residues 60 to 64 and 119 to 122 contribute to the GTP site; these read DTAGQ and NKCD. C194 bears the Cysteine methyl ester mark. C194 carries the S-geranylgeranyl cysteine lipid modification. Residues 195–197 constitute a propeptide, removed in mature form; it reads LIL.

It belongs to the small GTPase superfamily. Ras family.

The protein localises to the cell membrane. The enzyme catalyses GTP + H2O = GDP + phosphate + H(+). Alternates between an inactive form bound to GDP and an active form bound to GTP. Activated by a guanine nucleotide-exchange factor (GEF) and inactivated by a GTPase-activating protein (GAP). In terms of biological role, ras proteins bind GDP/GTP and possess intrinsic GTPase activity. The polypeptide is Ras-like protein rasB (rasB) (Dictyostelium discoideum (Social amoeba)).